A 77-amino-acid chain; its full sequence is Translation initiation factor IF-1, chloroplastic (77 aa).

The S1-like domain occupies 1–71 (MKEQKWIHEG…TKGRIIYRIR (71 aa)).

The protein belongs to the IF-1 family. As to quaternary structure, component of the 30S ribosomal translation pre-initiation complex which assembles on the 30S ribosome in the order IF-2 and IF-3, IF-1 and N-formylmethionyl-tRNA(fMet); mRNA recruitment can occur at any time during PIC assembly.

The protein resides in the plastid. The protein localises to the chloroplast. One of the essential components for the initiation of protein synthesis. Stabilizes the binding of IF-2 and IF-3 on the 30S subunit to which N-formylmethionyl-tRNA(fMet) subsequently binds. Helps modulate mRNA selection, yielding the 30S pre-initiation complex (PIC). Upon addition of the 50S ribosomal subunit IF-1, IF-2 and IF-3 are released leaving the mature 70S translation initiation complex. The protein is Translation initiation factor IF-1, chloroplastic of Vitis vinifera (Grape).